The following is a 183-amino-acid chain: Nucleoside triphosphate pyrophosphatase (183 aa).

The active-site Proton acceptor is the Asp71.

This sequence belongs to the Maf family. The cofactor is a divalent metal cation.

The protein localises to the cytoplasm. It carries out the reaction a ribonucleoside 5'-triphosphate + H2O = a ribonucleoside 5'-phosphate + diphosphate + H(+). It catalyses the reaction a 2'-deoxyribonucleoside 5'-triphosphate + H2O = a 2'-deoxyribonucleoside 5'-phosphate + diphosphate + H(+). Nucleoside triphosphate pyrophosphatase. May have a dual role in cell division arrest and in preventing the incorporation of modified nucleotides into cellular nucleic acids. The sequence is that of Nucleoside triphosphate pyrophosphatase from Campylobacter jejuni subsp. jejuni serotype O:6 (strain 81116 / NCTC 11828).